A 198-amino-acid polypeptide reads, in one-letter code: Holliday junction branch migration complex subunit RuvA (198 aa).

The segment at 1–63 (MIALLTGQIA…EDAIQLYGFR (63 aa)) is domain I. The tract at residues 64–142 (TSLEKSFFQL…KLDLSSVVVP (79 aa)) is domain II. A flexible linker region spans residues 143–153 (EPRQMPEDDLL). The domain III stretch occupies residues 153–198 (LEDVVSALLNLGYKEPQVRKVLAGLNPGSDASLEGVLKQALKSLMR).

The protein belongs to the RuvA family. Homotetramer. Forms an RuvA(8)-RuvB(12)-Holliday junction (HJ) complex. HJ DNA is sandwiched between 2 RuvA tetramers; dsDNA enters through RuvA and exits via RuvB. An RuvB hexamer assembles on each DNA strand where it exits the tetramer. Each RuvB hexamer is contacted by two RuvA subunits (via domain III) on 2 adjacent RuvB subunits; this complex drives branch migration. In the full resolvosome a probable DNA-RuvA(4)-RuvB(12)-RuvC(2) complex forms which resolves the HJ.

Its subcellular location is the cytoplasm. Functionally, the RuvA-RuvB-RuvC complex processes Holliday junction (HJ) DNA during genetic recombination and DNA repair, while the RuvA-RuvB complex plays an important role in the rescue of blocked DNA replication forks via replication fork reversal (RFR). RuvA specifically binds to HJ cruciform DNA, conferring on it an open structure. The RuvB hexamer acts as an ATP-dependent pump, pulling dsDNA into and through the RuvAB complex. HJ branch migration allows RuvC to scan DNA until it finds its consensus sequence, where it cleaves and resolves the cruciform DNA. The protein is Holliday junction branch migration complex subunit RuvA of Pelobacter propionicus (strain DSM 2379 / NBRC 103807 / OttBd1).